The sequence spans 228 residues: MALFPRGFYGSYGSDPSFTNLFRLLDDFDTYTREVQGSAPETGSRRHTQPTRTFSPKFDVRETEQTYELHGELPGIDRDNVQIEFTDPQTIVIRGRVERNYTAGTPPAQVAGVLTEKGEPHSPAAHHATVEDDVDEDNRSVATTATGANNQNNQQVAQRASAPTTEEKPKAPAEKYWVSERSIGEFSRTFNFPGRVDQNAVSASLNNGILTITVPKAKKHETIRIAIN.

Disordered regions lie at residues 34–53 (EVQGSAPETGSRRHTQPTRT), 117–136 (KGEPHSPAAHHATVEDDVDE), and 144–174 (TATGANNQNNQQVAQRASAPTTEEKPKAPAE). The region spanning 49-228 (QPTRTFSPKF…KHETIRIAIN (180 aa)) is the sHSP domain. Low complexity predominate over residues 144–158 (TATGANNQNNQQVAQ).

The protein belongs to the small heat shock protein (HSP20) family.

The protein localises to the cytoplasm. This Neurospora crassa (strain ATCC 24698 / 74-OR23-1A / CBS 708.71 / DSM 1257 / FGSC 987) protein is 30 kDa heat shock protein (hsp30).